The primary structure comprises 258 residues: Bidirectional sugar transporter SWEET7 (258 aa).

The Extracellular portion of the chain corresponds to 1 to 11 (MVFAHLNLLRK). Residues 12–32 (IVGIIGNFIALCLFLSPTPTF) form a helical membrane-spanning segment. A MtN3/slv 1 domain is found at 12–100 (IVGIIGNFIA…IFFVYCGRQK (89 aa)). The Cytoplasmic portion of the chain corresponds to 33-46 (VRIVKKKSVEEYSP). A helical transmembrane segment spans residues 47 to 67 (IPYLATLINCLVWVLYGLPTV). Topologically, residues 68–73 (HPDSTL) are extracellular. A helical membrane pass occupies residues 74 to 94 (VITINGTGILIEIVFLTIFFV). At 95–102 (YCGRQKQR) the chain is on the cytoplasmic side. Residues 103–123 (LIISAVIAAETAFIAILAVLV) traverse the membrane as a helical segment. At 124-134 (LTLQHTTEKRT) the chain is on the extracellular side. Residues 135–155 (MSVGIVCCVFNVMMYASPLSV) traverse the membrane as a helical segment. The MtN3/slv 2 domain occupies 136–221 (SVGIVCCVFN…LYGAYYKSTK (86 aa)). Topologically, residues 156 to 166 (MKMVIKTKSVE) are cytoplasmic. A helical transmembrane segment spans residues 167–187 (FMPFWLSVAGFLNAGVWTIYA). At 188–193 (LMPFDP) the chain is on the extracellular side. The chain crosses the membrane as a helical span at residues 194-214 (FMAIPNGIGCLFGLAQLILYG). Topologically, residues 215 to 258 (AYYKSTKRIMAERENQPGYVGLSSAIARTGSEKTANTNQEPNNV) are cytoplasmic.

This sequence belongs to the SWEET sugar transporter family. As to quaternary structure, forms heterooligomers with SWEET8, SWEET11, SWEET13, SWEET16 and SWEET17.

It localises to the cell membrane. Functionally, mediates both low-affinity uptake and efflux of sugar across the plasma membrane. The chain is Bidirectional sugar transporter SWEET7 from Arabidopsis thaliana (Mouse-ear cress).